A 237-amino-acid polypeptide reads, in one-letter code: MCDSHQKEEDNANTSERALFFNYHEFSYSFYEDLGSEDAKPTEHDEDHKLCITHFPNVYAARGSAEFQVTRVVRVPRRFDESRSSLETPQFSTQLPGSEPAAIVGDDGTSFVRCGRYDIGDHVFGCSSVSPLSEYLSAAELAEVVHRVNGFLLREEGEVFGWRNLSGLLLDMLTGGLWSWVLGPLLSRPVFQESLALEQYVAQLNSPGGLLHERGVRLVLPRRSGCLSLDFVVPRPK.

It belongs to the ERF4 family. As to quaternary structure, interacts with ERF2.

It is found in the endoplasmic reticulum membrane. The ERF2-SHR5 complex is a palmitoyltransferase specific for Ras proteins. Palmitoylates RAS2, which is required for its proper plasma membrane localization. The polypeptide is Ras modification protein ERF4 (SHR5) (Saccharomyces cerevisiae (strain ATCC 204508 / S288c) (Baker's yeast)).